Consider the following 305-residue polypeptide: Mitochondrial distribution and morphology protein 12 (305 aa).

The region spanning 1–236 (MSVEIDWDNI…WPSWIDLDFT (236 aa)) is the SMP-LTD domain. Residues 233 to 305 (LDFTPEDPED…RVNSNTSLEE (73 aa)) form a disordered region. A compositionally biased stretch (acidic residues) spans 235–248 (FTPEDPEDPEEEGR). The span at 258 to 269 (NDGKDIEMKSGT) shows a compositional bias: basic and acidic residues. Polar residues predominate over residues 279–305 (ESVQHVSPAVTSIDQESRVNSNTSLEE).

Belongs to the MDM12 family. Component of the ER-mitochondria encounter structure (ERMES) or MDM complex, composed of MMM1, MDM10, MDM12 and MDM34. An MMM1 homodimer associates with one molecule of MDM12 on each side in a pairwise head-to-tail manner, and the SMP-LTD domains of MMM1 and MDM12 generate a continuous hydrophobic tunnel for phospholipid trafficking.

It is found in the mitochondrion outer membrane. It localises to the endoplasmic reticulum membrane. In terms of biological role, component of the ERMES/MDM complex, which serves as a molecular tether to connect the endoplasmic reticulum (ER) and mitochondria. Components of this complex are involved in the control of mitochondrial shape and protein biogenesis, and function in nonvesicular lipid trafficking between the ER and mitochondria. MDM12 is required for the interaction of the ER-resident membrane protein MMM1 and the outer mitochondrial membrane-resident beta-barrel protein MDM10. The MDM12-MMM1 subcomplex functions in the major beta-barrel assembly pathway that is responsible for biogenesis of all mitochondrial outer membrane beta-barrel proteins, and acts in a late step after the SAM complex. The MDM10-MDM12-MMM1 subcomplex further acts in the TOM40-specific pathway after the action of the MDM12-MMM1 complex. Essential for establishing and maintaining the structure of mitochondria and maintenance of mtDNA nucleoids. This Kluyveromyces lactis (strain ATCC 8585 / CBS 2359 / DSM 70799 / NBRC 1267 / NRRL Y-1140 / WM37) (Yeast) protein is Mitochondrial distribution and morphology protein 12.